The chain runs to 465 residues: Sodium-dependent phosphate transport protein 1 (465 aa).

2 N-linked (GlcNAc...) asparagine glycosylation sites follow: N47 and N56. The next 10 helical transmembrane spans lie at 79–99 (GIIFSSIFYGAFLIQIPVGYI), 109–129 (IGFALFLSSLVSIFIPQAAAV), 171–191 (MSLSGFLLGPFIVLLVTGIIC), 198–218 (MVFYIFGACGCAVCLLWFVLY), 255–275 (AMIKSLPLWAISFCCFAYLWT), 304–324 (LPYLFAWICGVIAGHTADFLM), 337–357 (LFTAIGLLLPIVFSMCLLYLS), 363–383 (TITFLILANASSSFCLGGALI), 399–419 (VTTLIGMTGGMTSSTVAGLFL), and 428–448 (FKIFLLMSIINVISVIFYLIF).

This sequence belongs to the major facilitator superfamily. Sodium/anion cotransporter family. In terms of assembly, interacts with PDZK1. Kidney cortex and liver.

It is found in the apical cell membrane. It catalyses the reaction 3 Na(+)(out) + phosphate(out) = 3 Na(+)(in) + phosphate(in). The enzyme catalyses urate(out) = urate(in). Important for the resorption of phosphate by the kidney. May be involved in actively transporting phosphate into cells via Na(+) cotransport in the renal brush border membrane. Plays a role in urate transport in the kidney. This chain is Sodium-dependent phosphate transport protein 1 (SLC17A1), found in Oryctolagus cuniculus (Rabbit).